Here is a 405-residue protein sequence, read N- to C-terminus: Dihydrolipoyllysine-residue succinyltransferase component of 2-oxoglutarate dehydrogenase complex (405 aa).

A Lipoyl-binding domain is found at 3–78; the sequence is SVDILVPDLP…TSRQILGRLR (76 aa). Residue lysine 44 is modified to N6-lipoyllysine. The segment at 75 to 111 is disordered; sequence GRLREGNSAGKETSAKSEEKASTPAQRQQASLEEQNN. The span at 97–111 shows a compositional bias: polar residues; sequence TPAQRQQASLEEQNN. Positions 113-150 constitute a Peripheral subunit-binding (PSBD) domain; sequence ALSPAIRRLLAEHNLDASAIKGTGVGGRLTREDVEKHL. At lysine 148 the chain carries N6-acetyllysine. A compositionally biased stretch (low complexity) spans 153-173; that stretch reads APAKESAPAAAAPAAQPALAA. The interval 153–178 is disordered; it reads APAKESAPAAAAPAAQPALAARSEKR. Catalysis depends on residues histidine 376 and aspartate 380.

Belongs to the 2-oxoacid dehydrogenase family. As to quaternary structure, forms a 24-polypeptide structural core with octahedral symmetry. Part of the 2-oxoglutarate dehydrogenase (OGDH) complex composed of E1 (2-oxoglutarate dehydrogenase), E2 (dihydrolipoamide succinyltransferase) and E3 (dihydrolipoamide dehydrogenase); the complex contains multiple copies of the three enzymatic components (E1, E2 and E3). Interacts with SucA (via N-terminus), the E1 component of OGDH complex. The cofactor is (R)-lipoate.

The catalysed reaction is N(6)-[(R)-dihydrolipoyl]-L-lysyl-[protein] + succinyl-CoA = N(6)-[(R)-S(8)-succinyldihydrolipoyl]-L-lysyl-[protein] + CoA. The protein operates within amino-acid degradation; L-lysine degradation via saccharopine pathway; glutaryl-CoA from L-lysine: step 6/6. Functionally, E2 component of the 2-oxoglutarate dehydrogenase (OGDH) complex which catalyzes the second step in the conversion of 2-oxoglutarate to succinyl-CoA and CO(2). The chain is Dihydrolipoyllysine-residue succinyltransferase component of 2-oxoglutarate dehydrogenase complex (sucB) from Escherichia coli O157:H7.